We begin with the raw amino-acid sequence, 724 residues long: Semaphorin-2A (724 aa).

An N-terminal signal peptide occupies residues 1 to 25 (MSLLQLSPLLALLLLLCSSVSETAA). In terms of domain architecture, Sema spans 45–522 (QGNNNYGKHG…TDHRIKQIDL (478 aa)). Residue Asn-95 is glycosylated (N-linked (GlcNAc...) asparagine). An intrachain disulfide couples Cys-118 to Cys-129. Residues Asn-163, Asn-190, Asn-229, and Asn-314 are each glycosylated (N-linked (GlcNAc...) asparagine). 2 disulfides stabilise this stretch: Cys-291–Cys-399 and Cys-315–Cys-358. N-linked (GlcNAc...) asparagine glycosylation is present at Asn-401. 2 disulfide bridges follow: Cys-525-Cys-541 and Cys-535-Cys-550. The Ig-like C2-type domain occupies 552-663 (PYELDLLQDV…LCSYNITVDA (112 aa)). Residue Asn-563 is glycosylated (N-linked (GlcNAc...) asparagine). Cys-590 and Cys-647 are joined by a disulfide. N-linked (GlcNAc...) asparagine glycans are attached at residues Asn-658, Asn-670, and Asn-708.

Belongs to the semaphorin family. Interacts with PlexB. Transiently expressed by a single large muscle during motoneuron outgrowth and synapse formation.

The protein localises to the secreted. Functionally, ligand for transmembrane receptor PlexB. Plays a role in growth cone guidance. Required for both proper adult behavior and survival. Can function as a selective target-derived signal that inhibits the formation of specific synaptic terminal arbors. Function in neurons is essential for adult survival, motor neuron survival, and is important for climbing behavior and activity. During embryogenesis, plays an important role in correct salivary gland positioning. The polypeptide is Semaphorin-2A (Drosophila melanogaster (Fruit fly)).